We begin with the raw amino-acid sequence, 598 residues long: Inactive metallocarboxypeptidase ECM14 (598 aa).

An N-terminal signal peptide occupies residues 1–21; it reads MRLFTHGQVLALLAFVNTISA. Residues 22 to 174 constitute a propeptide that is removed on maturation; sequence IPSFSTNSYP…QTIYESYPSP (153 aa). In terms of domain architecture, Peptidase M14 spans 202 to 522; the sequence is NYQPLSVIVP…NAVMMLGRFL (321 aa). Zn(2+) is bound by residues His264 and Glu267. Residues 264-267, Arg322, and 339-340 contribute to the substrate site; these read HARE and DR. An intrachain disulfide couples Cys333 to Cys356. Asn349 carries N-linked (GlcNAc...) asparagine glycosylation. His396 is a Zn(2+) binding site. Position 397 to 398 (397 to 398) interacts with substrate; that stretch reads SY. The segment at 539 to 598 is disordered; the sequence is QRPNKDDKPILNDDDDDDDADTNDDGIGRKDDSWIPDEYKGDNDRDESDGGWAFRRLRKR. Acidic residues predominate over residues 550-562; the sequence is NDDDDDDDADTND. A compositionally biased stretch (basic and acidic residues) spans 564–581; it reads GIGRKDDSWIPDEYKGDN.

It belongs to the peptidase M14 family. It depends on Zn(2+) as a cofactor.

It localises to the vacuole. Its subcellular location is the secreted. Functionally, inactive carboxypeptidase that may play a role in cell wall organization and biogenesis. The chain is Inactive metallocarboxypeptidase ECM14 (ECM14) from Ajellomyces capsulatus (strain H143) (Darling's disease fungus).